Here is a 423-residue protein sequence, read N- to C-terminus: Mannose-6-phosphate isomerase (423 aa).

N-acetylalanine is present on Ala-2. Ser-102 and Ser-108 each carry phosphoserine. Residues Gln-110, His-112, Glu-137, and His-276 each coordinate Zn(2+). Arg-295 is a catalytic residue.

This sequence belongs to the mannose-6-phosphate isomerase type 1 family. Zn(2+) is required as a cofactor.

It is found in the cytoplasm. It catalyses the reaction D-mannose 6-phosphate = D-fructose 6-phosphate. It participates in nucleotide-sugar biosynthesis; GDP-alpha-D-mannose biosynthesis; alpha-D-mannose 1-phosphate from D-fructose 6-phosphate: step 1/2. Functionally, isomerase that catalyzes the interconversion of fructose-6-P and mannose-6-P and has a critical role in the supply of D-mannose derivatives required for many eukaryotic glycosylation reactions. This Rattus norvegicus (Rat) protein is Mannose-6-phosphate isomerase.